The chain runs to 690 residues: Exonuclease GOR (690 aa).

Disordered regions lie at residues 136–162 (TRVA…NRSG) and 567–690 (QPRH…SLHH). Residues 585-595 (APSTTAISPES) show a composition bias toward polar residues. A compositionally biased stretch (basic and acidic residues) spans 605 to 614 (KETGAVDGRR). The tract at residues 612 to 626 (GRRGQKAKSNPNRPL) is GOR14-1 epitope. Positions 631 to 646 (NPCRGPSGLSPSLCPS) are enriched in low complexity. A compositionally biased stretch (pro residues) spans 661-682 (PPLPVPRVPAAPPRACPHPSAH).

Belongs to the REXO1/REXO3 family.

The protein resides in the cytoplasm. Its subcellular location is the nucleus. In Pan troglodytes (Chimpanzee), this protein is Exonuclease GOR (REXO1L1).